The chain runs to 306 residues: Oxygen-dependent coproporphyrinogen-III oxidase (306 aa).

Position 94 (Ser94) interacts with substrate. Positions 98 and 108 each coordinate a divalent metal cation. His108 acts as the Proton donor in catalysis. 110–112 (NVR) contacts substrate. Residues His147 and His177 each coordinate a divalent metal cation. The tract at residues 242–277 (YVEFNLVYDRGTLFGLQTGGRTESILMSMPPLVRWQ) is important for dimerization. A substrate-binding site is contributed by 260–262 (GGR).

This sequence belongs to the aerobic coproporphyrinogen-III oxidase family. Homodimer. Requires a divalent metal cation as cofactor.

It is found in the cytoplasm. The enzyme catalyses coproporphyrinogen III + O2 + 2 H(+) = protoporphyrinogen IX + 2 CO2 + 2 H2O. The protein operates within porphyrin-containing compound metabolism; protoporphyrin-IX biosynthesis; protoporphyrinogen-IX from coproporphyrinogen-III (O2 route): step 1/1. Functionally, involved in the heme biosynthesis. Catalyzes the aerobic oxidative decarboxylation of propionate groups of rings A and B of coproporphyrinogen-III to yield the vinyl groups in protoporphyrinogen-IX. In Shewanella sediminis (strain HAW-EB3), this protein is Oxygen-dependent coproporphyrinogen-III oxidase.